The following is a 104-amino-acid chain: Large ribosomal subunit protein bL21 (104 aa).

It belongs to the bacterial ribosomal protein bL21 family. Part of the 50S ribosomal subunit. Contacts protein L20.

Its function is as follows. This protein binds to 23S rRNA in the presence of protein L20. The protein is Large ribosomal subunit protein bL21 of Lactococcus lactis subsp. cremoris (strain MG1363).